Reading from the N-terminus, the 135-residue chain is uncharacterized protein (135 aa).

The region spanning 8–123 (PKGKMVLRTL…IFVYVAVDEF (116 aa)) is the HotDog ACOT-type domain.

It belongs to the acyl coenzyme A hydrolase family.

This is an uncharacterized protein from Buchnera aphidicola subsp. Baizongia pistaciae (strain Bp).